We begin with the raw amino-acid sequence, 688 residues long: MSKDFLLEIGLEEMPAQYVTSSVAQLEKRVSDWLNENQITFEKIKTYSTPRRLTVLVEAMAEEQANRVEEAKGPAKKIALDDEGNWSKAALGFARSQKVEPADLTFREIKGVEYIYIKKEVIGEKTTALLPSLEKVVTSMTFPVSMHWGSNDLRYIRPIKWLIAMFGEEIIPFEITGVSTSNTSRGHRFLGKTATIKQPSDYPNALLEQFVVVNAEERKQAIVEQLRELESMENWQIKEDEDLLEEVTNLVEYPTVLAGNFEKEYLELPEEVLITTMKEHQRYFPVFSKDEELLPHFVTVRNGNHENLDTVARGNEKVLRARLSDADFFYQEDLKITIDEAVAKLQNIVFHEKLGTLTEKMKRVQKVALMLADYLDWQEEDKQDIIRLTNIYKFDLVTNIVGEFPELQGLMGEKYALLQGEKPAIAIAIREHYLPSSAEGALPQTDLGSIIAIADKLETLVGFFCVNIVPTGSADPFGLRRSAFGAMRIIQANGWDIPVLELLSRIVDMERAEGAVELPSDDVKKEVQTFLKNRLRVVLQNHHIRHDIIDAVIGGDPNTIPQLVDRAQILNKHVESDWFRPTVEALTRVMNISKKHEGNVEVDPSLFENKYEQALFDEIEKLKYDYANLTIVDRLRAFAALRTTIDDYFDNTLVMSENIELKNNRLALLFELASFIKEFAQMDEINVK.

It belongs to the class-II aminoacyl-tRNA synthetase family. As to quaternary structure, tetramer of two alpha and two beta subunits.

The protein localises to the cytoplasm. It catalyses the reaction tRNA(Gly) + glycine + ATP = glycyl-tRNA(Gly) + AMP + diphosphate. This is Glycine--tRNA ligase beta subunit from Listeria welshimeri serovar 6b (strain ATCC 35897 / DSM 20650 / CCUG 15529 / CIP 8149 / NCTC 11857 / SLCC 5334 / V8).